The following is a 518-amino-acid chain: Glutamate--cysteine ligase (518 aa).

This sequence belongs to the glutamate--cysteine ligase type 1 family. Type 1 subfamily.

It catalyses the reaction L-cysteine + L-glutamate + ATP = gamma-L-glutamyl-L-cysteine + ADP + phosphate + H(+). Its pathway is sulfur metabolism; glutathione biosynthesis; glutathione from L-cysteine and L-glutamate: step 1/2. This is Glutamate--cysteine ligase from Escherichia fergusonii (strain ATCC 35469 / DSM 13698 / CCUG 18766 / IAM 14443 / JCM 21226 / LMG 7866 / NBRC 102419 / NCTC 12128 / CDC 0568-73).